The sequence spans 216 residues: Probable transaldolase (216 aa).

The active-site Schiff-base intermediate with substrate is K83.

It belongs to the transaldolase family. Type 3B subfamily.

It localises to the cytoplasm. The enzyme catalyses D-sedoheptulose 7-phosphate + D-glyceraldehyde 3-phosphate = D-erythrose 4-phosphate + beta-D-fructose 6-phosphate. It functions in the pathway carbohydrate degradation; pentose phosphate pathway; D-glyceraldehyde 3-phosphate and beta-D-fructose 6-phosphate from D-ribose 5-phosphate and D-xylulose 5-phosphate (non-oxidative stage): step 2/3. Its function is as follows. Transaldolase is important for the balance of metabolites in the pentose-phosphate pathway. This chain is Probable transaldolase, found in Clostridioides difficile (strain 630) (Peptoclostridium difficile).